A 289-amino-acid polypeptide reads, in one-letter code: Rhodopsin (289 aa).

Topologically, residues 1 to 7 are extracellular; it reads YLVNPAG. Residues 8–32 form a helical membrane-spanning segment; the sequence is YAALGAYMFLLILIGFPVNFLTLYV. Residues 33-44 are Cytoplasmic-facing; it reads TLEHKKLRTPLN. Residues 45–67 form a helical membrane-spanning segment; sequence YILLNLAVADLFMVLGGFTTTMY. Residues 68 to 81 lie on the Extracellular side of the membrane; sequence TSMHGYFVLGRLGC. A disulfide bridge connects residues Cys-81 and Cys-158. Residues 82–104 traverse the membrane as a helical segment; it reads NLEGFFATLGGEIALWSLVVLAI. Residues 105–107 carry the 'Ionic lock' involved in activated form stabilization motif; the sequence is ERW. Residues 105 to 123 lie on the Cytoplasmic side of the membrane; the sequence is ERWIVGLKPIRNFRFTEDH. Residues 124–144 traverse the membrane as a helical segment; sequence AIMGLAFSWVMALSCAVPPLA. Topologically, residues 145–173 are extracellular; sequence GWLRYIPEGIQGSCGVDYYTRAEGFNNES. N-linked (GlcNAc...) asparagine glycosylation is present at Asn-171. Residues 174–195 traverse the membrane as a helical segment; that stretch reads FVIYMFTVHFLIPLSVIFFCYG. Residues 196–223 lie on the Cytoplasmic side of the membrane; sequence RLLCAVKEAAAAQQESETTQRAEKEVSR. A helical membrane pass occupies residues 224–245; the sequence is MVVIMVIGFLVCWLPYASVAWW. Residues 246 to 257 lie on the Extracellular side of the membrane; that stretch reads IFCNQGSDFGPI. A helical transmembrane segment spans residues 258–279; that stretch reads FMTLPSFFAKRPAIYNPMIYIC. N6-(retinylidene)lysine is present on Lys-267. At 280–289 the chain is on the cytoplasmic side; the sequence is MNKQFRHCMI.

The protein belongs to the G-protein coupled receptor 1 family. Opsin subfamily. Phosphorylated on some or all of the serine and threonine residues present in the C-terminal region. Post-translationally, contains one covalently linked retinal chromophore.

The protein localises to the membrane. Its subcellular location is the cell projection. The protein resides in the cilium. It is found in the photoreceptor outer segment. Functionally, photoreceptor required for image-forming vision at low light intensity. While most salt water fish species use retinal as chromophore, most freshwater fish use 3-dehydroretinal, or a mixture of retinal and 3-dehydroretinal. Light-induced isomerization of 11-cis to all-trans retinal triggers a conformational change that activates signaling via G-proteins. Subsequent receptor phosphorylation mediates displacement of the bound G-protein alpha subunit by arrestin and terminates signaling. The chain is Rhodopsin (rho) from Limnocottus pallidus (Ray-finned fish).